The sequence spans 57 residues: DELTA-limacoditoxin(2)-Dv11 (57 aa).

A signal peptide spans 1–24; sequence MKFAKTFLLLFVVLLLLSIVMAEP.

The protein belongs to the limacoditoxin-2 (cecropin-like) family. In terms of tissue distribution, expressed by the venom secretory cell of the spine. The spine is a cuticular structure containing a single large nucleated venom-secreting cell at its base. It is an independent unit capable of producing, storing and injecting venom. On the back of D.vulnerans caterpillars, spines are grouped together by 50 to 100 to form scoli, of which there are eight in D.vulnerans.

It localises to the secreted. Functionally, peptide that induces pain in mammals and has insecticidal, antibacterial and antiparasitic activities. Induces partially reversible paralysis in D.melanogaster when tested at high doses. Shows a moderate antiparasitic activity against the major pathogenic nematode of ruminants (H.contortus, EC(50)=30.5 uM). Has potent or moderate antibacterial activities against A.baumannii (MIC&lt;0.25 ug/mL) and S.aureus (MIC=16 ug/mL). Has no activity on the other bacteria tested, nor on the fungus C.albicans. Strongly induces the increase of intracellular calcium in mice DRG neurons, which is a proxy for neuronal activation that would occur during nociception. This increase is due to influx of extracellular calcium, suggesting that the peptide forms pore or channel in neuronal cell membranes. In addition, intraplantar injection in mice provokes nocifensive behavior, suggesting a pain-inducing activity. The protein is DELTA-limacoditoxin(2)-Dv11 of Doratifera vulnerans (Mottled cup moth).